Consider the following 458-residue polypeptide: UDP-N-acetylmuramoylalanine--D-glutamate ligase (458 aa).

Glycine 124 to threonine 130 serves as a coordination point for ATP.

Belongs to the MurCDEF family.

Its subcellular location is the cytoplasm. It catalyses the reaction UDP-N-acetyl-alpha-D-muramoyl-L-alanine + D-glutamate + ATP = UDP-N-acetyl-alpha-D-muramoyl-L-alanyl-D-glutamate + ADP + phosphate + H(+). It participates in cell wall biogenesis; peptidoglycan biosynthesis. In terms of biological role, cell wall formation. Catalyzes the addition of glutamate to the nucleotide precursor UDP-N-acetylmuramoyl-L-alanine (UMA). This is UDP-N-acetylmuramoylalanine--D-glutamate ligase from Clostridium botulinum (strain Alaska E43 / Type E3).